The chain runs to 111 residues: MRLITLFLLLLLLAIQYPLWLGKGGWLRVWDMQKQVASQNQRNAELKQRNLKLEGEVKDLKEGTGAIEERARYELGMVKDDEGFVQFVAPAPKTSETPLPPPAALQPNHRH.

Residues 1–3 are Cytoplasmic-facing; it reads MRL. Residues 4–21 form a helical membrane-spanning segment; that stretch reads ITLFLLLLLLAIQYPLWL. The Periplasmic portion of the chain corresponds to 22–111; it reads GKGGWLRVWD…PAALQPNHRH (90 aa). Positions 28–64 form a coiled coil; it reads RVWDMQKQVASQNQRNAELKQRNLKLEGEVKDLKEGT. Residues 90–111 are disordered; the sequence is PAPKTSETPLPPPAALQPNHRH.

Belongs to the FtsB family. In terms of assembly, part of a complex composed of FtsB, FtsL and FtsQ.

The protein localises to the cell inner membrane. Essential cell division protein. May link together the upstream cell division proteins, which are predominantly cytoplasmic, with the downstream cell division proteins, which are predominantly periplasmic. This Ralstonia nicotianae (strain ATCC BAA-1114 / GMI1000) (Ralstonia solanacearum) protein is Cell division protein FtsB.